Here is a 198-residue protein sequence, read N- to C-terminus: Linker for activation of T-cells family member 2 (198 aa).

Topologically, residues 1–4 (MAQP) are extracellular. A helical; Signal-anchor for type III membrane protein membrane pass occupies residues 5–24 (ELLWAAAGLMLLGVAVSACV). 2 S-palmitoyl cysteine lipidation sites follow: Cys-23 and Cys-26. The Cytoplasmic portion of the chain corresponds to 25–198 (RCQLYATKRG…PTIDAVVLSK (174 aa)). 3 positions are modified to phosphotyrosine: Tyr-136, Tyr-155, and Tyr-184.

As to quaternary structure, when phosphorylated, interacts with GRB2. Phosphorylated on tyrosines following cross-linking of BCR; which induces the recruitment of GRB2.

It localises to the cell membrane. In terms of biological role, involved in BCR (B-cell antigen receptor)-mediated signaling in B-cells. May also be involved in FCER1 (high affinity immunoglobulin epsilon receptor)-mediated signaling in mast cells and FCGR1 (high affinity immunoglobulin gamma Fc receptor I)-mediated signaling in myeloid cells. Couples activation of these receptors and their associated kinases with distal intracellular events such as calcium mobilization through the recruitment of GRB2. This chain is Linker for activation of T-cells family member 2 (LAT2), found in Gallus gallus (Chicken).